Here is a 38-residue protein sequence, read N- to C-terminus: Large ribosomal subunit protein bL36 (38 aa).

It belongs to the bacterial ribosomal protein bL36 family.

This is Large ribosomal subunit protein bL36 from Gemmatimonas aurantiaca (strain DSM 14586 / JCM 11422 / NBRC 100505 / T-27).